A 430-amino-acid polypeptide reads, in one-letter code: Serine--tRNA ligase (430 aa).

237–239 (TAE) contributes to the L-serine binding site. ATP is bound at residue 268-270 (RSE). Glu-291 serves as a coordination point for L-serine. Residue 355-358 (EISS) coordinates ATP. Position 391 (Ser-391) interacts with L-serine.

This sequence belongs to the class-II aminoacyl-tRNA synthetase family. Type-1 seryl-tRNA synthetase subfamily. As to quaternary structure, homodimer. The tRNA molecule binds across the dimer.

The protein localises to the cytoplasm. It catalyses the reaction tRNA(Ser) + L-serine + ATP = L-seryl-tRNA(Ser) + AMP + diphosphate + H(+). It carries out the reaction tRNA(Sec) + L-serine + ATP = L-seryl-tRNA(Sec) + AMP + diphosphate + H(+). It participates in aminoacyl-tRNA biosynthesis; selenocysteinyl-tRNA(Sec) biosynthesis; L-seryl-tRNA(Sec) from L-serine and tRNA(Sec): step 1/1. Functionally, catalyzes the attachment of serine to tRNA(Ser). Is also able to aminoacylate tRNA(Sec) with serine, to form the misacylated tRNA L-seryl-tRNA(Sec), which will be further converted into selenocysteinyl-tRNA(Sec). The sequence is that of Serine--tRNA ligase from Enterobacter sp. (strain 638).